A 257-amino-acid chain; its full sequence is tRNA pseudouridine synthase A (257 aa).

Residue aspartate 43 is the Nucleophile of the active site. Residue tyrosine 94 coordinates substrate.

This sequence belongs to the tRNA pseudouridine synthase TruA family.

It catalyses the reaction uridine(38/39/40) in tRNA = pseudouridine(38/39/40) in tRNA. Formation of pseudouridine at positions 38, 39 and 40 in the anticodon stem and loop of transfer RNAs. This is tRNA pseudouridine synthase A from Pyrobaculum calidifontis (strain DSM 21063 / JCM 11548 / VA1).